Here is a 367-residue protein sequence, read N- to C-terminus: Dual-specificity RNA methyltransferase RlmN (367 aa).

Residue E93 is the Proton acceptor of the active site. One can recognise a Radical SAM core domain in the interval E99–D333. The cysteines at positions 106 and 338 are disulfide-linked. [4Fe-4S] cluster contacts are provided by C113, C117, and C120. S-adenosyl-L-methionine contacts are provided by residues G162–E163, S194, S216–H218, and N295. C338 serves as the catalytic S-methylcysteine intermediate.

It belongs to the radical SAM superfamily. RlmN family. [4Fe-4S] cluster is required as a cofactor.

It is found in the cytoplasm. It catalyses the reaction adenosine(2503) in 23S rRNA + 2 reduced [2Fe-2S]-[ferredoxin] + 2 S-adenosyl-L-methionine = 2-methyladenosine(2503) in 23S rRNA + 5'-deoxyadenosine + L-methionine + 2 oxidized [2Fe-2S]-[ferredoxin] + S-adenosyl-L-homocysteine. The enzyme catalyses adenosine(37) in tRNA + 2 reduced [2Fe-2S]-[ferredoxin] + 2 S-adenosyl-L-methionine = 2-methyladenosine(37) in tRNA + 5'-deoxyadenosine + L-methionine + 2 oxidized [2Fe-2S]-[ferredoxin] + S-adenosyl-L-homocysteine. Functionally, specifically methylates position 2 of adenine 2503 in 23S rRNA and position 2 of adenine 37 in tRNAs. m2A2503 modification seems to play a crucial role in the proofreading step occurring at the peptidyl transferase center and thus would serve to optimize ribosomal fidelity. In Aeromonas hydrophila subsp. hydrophila (strain ATCC 7966 / DSM 30187 / BCRC 13018 / CCUG 14551 / JCM 1027 / KCTC 2358 / NCIMB 9240 / NCTC 8049), this protein is Dual-specificity RNA methyltransferase RlmN.